The primary structure comprises 484 residues: Aspartyl/glutamyl-tRNA(Asn/Gln) amidotransferase subunit B (484 aa).

This sequence belongs to the GatB/GatE family. GatB subfamily. As to quaternary structure, heterotrimer of A, B and C subunits.

The enzyme catalyses L-glutamyl-tRNA(Gln) + L-glutamine + ATP + H2O = L-glutaminyl-tRNA(Gln) + L-glutamate + ADP + phosphate + H(+). It catalyses the reaction L-aspartyl-tRNA(Asn) + L-glutamine + ATP + H2O = L-asparaginyl-tRNA(Asn) + L-glutamate + ADP + phosphate + 2 H(+). Functionally, allows the formation of correctly charged Asn-tRNA(Asn) or Gln-tRNA(Gln) through the transamidation of misacylated Asp-tRNA(Asn) or Glu-tRNA(Gln) in organisms which lack either or both of asparaginyl-tRNA or glutaminyl-tRNA synthetases. The reaction takes place in the presence of glutamine and ATP through an activated phospho-Asp-tRNA(Asn) or phospho-Glu-tRNA(Gln). The sequence is that of Aspartyl/glutamyl-tRNA(Asn/Gln) amidotransferase subunit B from Cupriavidus metallidurans (strain ATCC 43123 / DSM 2839 / NBRC 102507 / CH34) (Ralstonia metallidurans).